A 608-amino-acid polypeptide reads, in one-letter code: MASIEEIAHQIIEQQMGEIVTEQPTGQKIQIVTALDHNTQGKQFILTNHDGSTPNKVILARQDSTPGKVFFTTPDAAGVNQLFFTTPDLSTQQLQFLTDNSSSEQGPNKVFDLCVVCGDKASGRHYGEVTCEGCKGFFKRSIRKNLVYSCRGSKDCIINKHHRNRCQYCRLQRCIAFGMKQDSVQCERKPIEVSREKSSNCAASTEKIYIRKDLRSPLAATPTFVTDSETARSAGLLDSGMFVNIHQSGIKTESTMLMTPDKAVSCQGDLSTLASVVTSLANLGKTKDPAPNSNEVSMIESLSNGDTSYTSVCEFHQEMQTNGDVSRAFDTLAKALNPGESTACQSSGEGMEGNVHLIAGDSSINYIEKEGPLLSDSHVAFRLTMPSPMPEYLNVHYIGESASRLLFLSMHWALSIPSFQALGQENSISLVKAYWNELFTLGLAQCWQVMNVATILATFVNCLHSSLQQDKISAERRKLLMEHIFKLQEFCNSMVKLCIDGYEYAYLKAIVLFSPDHPGLENMEQIEKFQEKAYVEFQDYITKTYPDDTYRLSRLLLRLPALRLMNATITEELFFKGLIGNVRIDSVIPHILKMEPADYNSQIIGHSI.

Residues 1–179 (MASIEEIAHQ…RLQRCIAFGM (179 aa)) form a required for interaction with KAT2B region. A DNA-binding region (nuclear receptor) is located at residues 111–186 (FDLCVVCGDK…FGMKQDSVQC (76 aa)). 2 consecutive NR C4-type zinc fingers follow at residues 114–134 (CVVC…CEGC) and 150–169 (CRGS…CQYC). Residues S198 and S216 each carry the phosphoserine modification. The residue at position 221 (T221) is a Phosphothreonine. T223 is modified (phosphothreonine; by MAPK1). Residue K251 forms a Glycyl lysine isopeptide (Lys-Gly) (interchain with G-Cter in SUMO); alternate linkage. K251 is covalently cross-linked (Glycyl lysine isopeptide (Lys-Gly) (interchain with G-Cter in SUMO2); alternate). The NR LBD domain occupies 353 to 595 (GNVHLIAGDS…SVIPHILKME (243 aa)). A Phosphoserine; by PKC modification is found at S586. The segment at 589–608 (PHILKMEPADYNSQIIGHSI) is required for interaction with NRIP1. K593 is covalently cross-linked (Glycyl lysine isopeptide (Lys-Gly) (interchain with G-Cter in SUMO2)).

Belongs to the nuclear hormone receptor family. NR2 subfamily. As to quaternary structure, homodimer. Heterodimer; with NR2C2 which is required for chromatin remodeling and for binding to promoter regions such as globin DR1 repeats. Interacts with ESR1; the interaction prevents homodimerization of ESR1 and suppresses its transcriptional activity and cell growth. Interacts with NRIP1 (via its LXXLL motifs); the interaction provides corepressor activity. Interacts with HDAC3 (via the DNA-binding domain); the interaction recruits phosphorylated NR2C1 to PML bodies for sumoylation. Interacts with HDAC4 (via the DNA-binding domain). Interacts with PIAS1; the interaction is required for sumoylation of NR2C1. Interacts with UBE2I; the interaction is required for sumoylation of NR2C1. Interacts with KAT2B; the interaction acts as a corepressor of gene expression. Post-translationally, sumoylation requires both PIAS1 and UBE2I. Sumoylation appears to dissociate NR2C1 from the PML nuclear bodies. Enhances the interaction with NRIP1 but inhibits interaction with KAT2B. In proliferating cells, stimulation by all-trans retinoic acid, activation of MAPK1-mediated phosphorylation and recruitment to PML bodies with subsequent sumoylation, suppresses OCT4 expression. In terms of processing, phosphorylated on several serine and threonine residues. Phosphorylation on Thr-223, stimulated by all-trans retinoic acid (atRA) mediates PML location and sumoylation in proliferating cells which then modulates its association with effector molecules, KAT2B and NRIP1. Phosphorylation on Ser-586 by PKC is important for protein stability and function as activator of RARB.

It localises to the nucleus. It is found in the PML body. Functionally, orphan nuclear receptor. Binds the IR7 element in the promoter of its own gene in an autoregulatory negative feedback mechanism. Primarily repressor of a broad range of genes including ESR1 and RARB. Together with NR2C2, forms the core of the DRED (direct repeat erythroid-definitive) complex that represses embryonic and fetal globin transcription. Binds to hormone response elements (HREs) consisting of two 5'-AGGTCA-3' half site direct repeat consensus sequences. Also activator of OCT4 gene expression. Plays a fundamental role in early embryogenesis and regulates embryonic stem cell proliferation and differentiation. Mediator of retinoic acid-regulated preadipocyte proliferation. The sequence is that of Nuclear receptor subfamily 2 group C member 1 (NR2C1) from Bos taurus (Bovine).